We begin with the raw amino-acid sequence, 515 residues long: Bifunctional purine biosynthesis protein PurH (515 aa).

One can recognise an MGS-like domain in the interval 1 to 145 (MTKRALISVS…KNHASVTVVV (145 aa)).

This sequence belongs to the PurH family.

The enzyme catalyses (6R)-10-formyltetrahydrofolate + 5-amino-1-(5-phospho-beta-D-ribosyl)imidazole-4-carboxamide = 5-formamido-1-(5-phospho-D-ribosyl)imidazole-4-carboxamide + (6S)-5,6,7,8-tetrahydrofolate. The catalysed reaction is IMP + H2O = 5-formamido-1-(5-phospho-D-ribosyl)imidazole-4-carboxamide. The protein operates within purine metabolism; IMP biosynthesis via de novo pathway; 5-formamido-1-(5-phospho-D-ribosyl)imidazole-4-carboxamide from 5-amino-1-(5-phospho-D-ribosyl)imidazole-4-carboxamide (10-formyl THF route): step 1/1. Its pathway is purine metabolism; IMP biosynthesis via de novo pathway; IMP from 5-formamido-1-(5-phospho-D-ribosyl)imidazole-4-carboxamide: step 1/1. The protein is Bifunctional purine biosynthesis protein PurH of Streptococcus thermophilus (strain ATCC BAA-491 / LMD-9).